Consider the following 588-residue polypeptide: Outer membrane transporter CdiB (588 aa).

One can recognise a POTRA domain in the interval 104 to 179 (FTVSSIVVSG…GVLHITVMEG (76 aa)).

It belongs to the TPS (TC 1.B.20) family.

It localises to the cell outer membrane. Its function is as follows. Potential outer membrane protein component of a toxin-immunity protein module, which functions as a cellular contact-dependent growth inhibition (CDI) system. CDI modules allow bacteria to communicate with and inhibit the growth of closely related neighboring bacteria in a contact-dependent fashion. This protein may be required for secretion and assembly of the CdiA toxin protein. Inhibitory cells must be in logarithmic (not stationary) phase to inhibit growth of their targets, while the presence of P or S but not type 1 pili protects the target cells against growth inhibition. Probable member of a two partner secretion pathway (TPS) in which it mediates the secretion of CdiA. The sequence is that of Outer membrane transporter CdiB from Escherichia coli.